Here is a 303-residue protein sequence, read N- to C-terminus: 4-sulfomuconolactone hydrolase (303 aa).

Belongs to the metallo-dependent hydrolases superfamily. Sulfomuconolactone hydrolase family. Monomer. Zn(2+) is required as a cofactor.

The catalysed reaction is 4-sulfomuconolactone + H2O = maleylacetate + sulfite + 2 H(+). Completely inhibited by ZnCl(2) and CuCl(2). In terms of biological role, involved in the degradation of 4-sulfocatechol which is a central intermediate in the degradation of substituted sulfonated benzenes. Catalyzes the hydrolytical desulfonation of 4-sulfomuconolactone to yield maleylacetate. The polypeptide is 4-sulfomuconolactone hydrolase (Hydrogenophaga intermedia).